The following is a 322-amino-acid chain: Phospholipase A1 (322 aa).

A signal peptide spans 1-18 (MNFKYSILFICFGTLDRG). A disulfide bond links Cys23 and Cys106. The active-site Nucleophile is the Ser156. Asp184 (charge relay system) is an active-site residue. 2 cysteine pairs are disulfide-bonded: Cys195–Cys200 and Cys238–Cys246. Residue His248 is the Charge relay system of the active site. 3 cysteine pairs are disulfide-bonded: Cys263/Cys290, Cys264/Cys315, and Cys283/Cys288.

It belongs to the AB hydrolase superfamily. Lipase family. In terms of processing, contains six disulfide bonds. Post-translationally, is not glycosylated. In terms of tissue distribution, expressed by the venom gland.

The protein resides in the secreted. The enzyme catalyses a 1,2-diacyl-sn-glycero-3-phosphocholine + H2O = a 2-acyl-sn-glycero-3-phosphocholine + a fatty acid + H(+). Catalyzes the hydrolysis of phosphatidylcholine with phospholipase A1 activity. Shows hemolytic activity. Acts as an allergen. This is Phospholipase A1 from Polybia paulista (Neotropical social wasp).